Consider the following 478-residue polypeptide: Cytochrome c-552 (478 aa).

A signal peptide spans 1–27; sequence MKKQWTRRSAAAIAMVTTLLLSSHSFA. Heme c is bound at residue His-91. 3 residues coordinate heme: Cys-119, Cys-122, and Lys-123. Cys-157, Cys-160, His-161, Cys-206, Cys-209, and His-210 together coordinate heme c. Residues Glu-212, Tyr-213, Lys-258, and Gln-260 each coordinate Ca(2+). Tyr-213 provides a ligand contact to substrate. A substrate-binding site is contributed by His-261. Residues His-272, Cys-279, Cys-282, His-283, His-298, Cys-311, Cys-314, His-315, and His-390 each coordinate heme c.

It belongs to the cytochrome c-552 family. Ca(2+) is required as a cofactor. Heme c serves as cofactor.

It localises to the periplasm. It carries out the reaction 6 Fe(III)-[cytochrome c] + NH4(+) + 2 H2O = 6 Fe(II)-[cytochrome c] + nitrite + 8 H(+). Its pathway is nitrogen metabolism; nitrate reduction (assimilation). In terms of biological role, catalyzes the reduction of nitrite to ammonia, consuming six electrons in the process. The sequence is that of Cytochrome c-552 from Aliivibrio fischeri (strain ATCC 700601 / ES114) (Vibrio fischeri).